We begin with the raw amino-acid sequence, 364 residues long: DNA polymerase IV (364 aa).

The UmuC domain occupies 14 to 198 (IIHIDMDAFF…LPIEKFHGVG (185 aa)). Aspartate 18 and aspartate 116 together coordinate Mg(2+). Glutamate 117 is a catalytic residue.

Belongs to the DNA polymerase type-Y family. Monomer. Mg(2+) serves as cofactor.

Its subcellular location is the cytoplasm. It catalyses the reaction DNA(n) + a 2'-deoxyribonucleoside 5'-triphosphate = DNA(n+1) + diphosphate. Poorly processive, error-prone DNA polymerase involved in untargeted mutagenesis. Copies undamaged DNA at stalled replication forks, which arise in vivo from mismatched or misaligned primer ends. These misaligned primers can be extended by PolIV. Exhibits no 3'-5' exonuclease (proofreading) activity. May be involved in translesional synthesis, in conjunction with the beta clamp from PolIII. The chain is DNA polymerase IV from Streptococcus pyogenes serotype M6 (strain ATCC BAA-946 / MGAS10394).